A 590-amino-acid polypeptide reads, in one-letter code: MSTRLSKLFVRTLREDPVDAEVASHRLLVRAGYIRRQAPGIFAWLPLGLRVKNKVEAIVREEMERIGAQEVHFPALLPAEPYQATGRYDEYGPGMFRLEDRKRAPMVLAPTHEEFFALLVKDLYSSYKDLPLSIYQIQDKYRDEARPRAGILRGREFTMKDAYSFDHTDAGLAVSYQAQRDAYERIFQRLGLEYVIVAADAGAMGGSKSEEFLHPTPIGEDTFVRSPGGYAANVEAFTTLVPESIPIEGQPAARVFDSPDTPTIQTLVDLANAREPREDGRAWTAADTLKNIVLALTHLDGTRELVVVGIPGDRDIDLKRAEVAFFPAEVEAANDGDLAKNPGLVKGYIGPWSPEGPVLGSTSSTKVRYVVDPRVVDGSSWITGANVAGKHVLSLVAGRDFTPDGVVEAADVRDGDPAPDGSGPISTARGTEIGHVFELGRKYAEALGLKVLDENGKLVTVTMGSYGIGITRNLALVAEATQDGRGLLWPASISPFDVHVVMTGKDPAVGTAAEELVDALDAAGLDVLFDDRPKVSPGVKFGDAELIGVPTVVIVGRGAVDGMAELWDRRTNERTPVALADVAGALTAAR.

The protein belongs to the class-II aminoacyl-tRNA synthetase family. ProS type 1 subfamily. As to quaternary structure, homodimer.

The protein localises to the cytoplasm. It carries out the reaction tRNA(Pro) + L-proline + ATP = L-prolyl-tRNA(Pro) + AMP + diphosphate. Its function is as follows. Catalyzes the attachment of proline to tRNA(Pro) in a two-step reaction: proline is first activated by ATP to form Pro-AMP and then transferred to the acceptor end of tRNA(Pro). As ProRS can inadvertently accommodate and process non-cognate amino acids such as alanine and cysteine, to avoid such errors it has two additional distinct editing activities against alanine. One activity is designated as 'pretransfer' editing and involves the tRNA(Pro)-independent hydrolysis of activated Ala-AMP. The other activity is designated 'posttransfer' editing and involves deacylation of mischarged Ala-tRNA(Pro). The misacylated Cys-tRNA(Pro) is not edited by ProRS. This is Proline--tRNA ligase from Clavibacter sepedonicus (Clavibacter michiganensis subsp. sepedonicus).